Here is a 557-residue protein sequence, read N- to C-terminus: Aerobic glycerol-3-phosphate dehydrogenase (557 aa).

21–49 is an FAD binding site; the sequence is DVVIVGGGITGAGIALDASNRGMKVALVE.

It belongs to the FAD-dependent glycerol-3-phosphate dehydrogenase family. Requires FAD as cofactor.

The protein resides in the cytoplasm. It carries out the reaction a quinone + sn-glycerol 3-phosphate = dihydroxyacetone phosphate + a quinol. It participates in polyol metabolism; glycerol degradation via glycerol kinase pathway; glycerone phosphate from sn-glycerol 3-phosphate (aerobic route): step 1/1. In Staphylococcus epidermidis (strain ATCC 35984 / DSM 28319 / BCRC 17069 / CCUG 31568 / BM 3577 / RP62A), this protein is Aerobic glycerol-3-phosphate dehydrogenase (glpD).